Consider the following 482-residue polypeptide: Pentatricopeptide repeat-containing protein At1g74900, mitochondrial (482 aa).

11 PPR repeats span residues Asp-90 to Pro-124, Ser-125 to Gln-159, Asp-160 to Arg-190, Asp-194 to Pro-228, Asn-229 to Ile-263, Asp-264 to Pro-298, Ser-299 to Pro-333, Asn-334 to Pro-368, Asn-369 to Pro-403, Asn-404 to Pro-441, and Arg-442 to Leu-476.

Belongs to the PPR family. P subfamily.

It is found in the mitochondrion. Functionally, required for the trans-splicing of intron 1 of the mitochondrial nad1 transcript encoding the ND1 subunit of the mitochondrial membrane respiratory chain NADH dehydrogenase (Complex I). The sequence is that of Pentatricopeptide repeat-containing protein At1g74900, mitochondrial (OTP43) from Arabidopsis thaliana (Mouse-ear cress).